The sequence spans 87 residues: Mu-theraphotoxin-Hs1a (87 aa).

The first 24 residues, 1-24, serve as a signal peptide directing secretion; the sequence is MVNMKASMFLTFAGLVLLFVVCYA. Positions 25–52 are excised as a propeptide; it reads SESEEKEFPKEMLSSIFAVDNDFKQEER. 3 disulfide bridges follow: C54–C67, C61–C72, and C66–C79.

Belongs to the neurotoxin 10 (Hwtx-1) family. 51 (Hntx-8) subfamily. Hntx-8 sub-subfamily. In terms of tissue distribution, expressed by the venom gland.

The protein resides in the secreted. Its function is as follows. Probable sodium channel pore blocker that dose-dependently inhibits voltage-gated sodium channels (VGSC) on DUM neurons in a way similar to tetrodotoxin. Has no effect on the kinetics of activation and inactivation. Seems not to interact with VGSC in an inactivated state. In vivo, reversibly paralyzes cockroaches, and can enhance the muscular contraction elicited by stimulating its nerve. The sequence is that of Mu-theraphotoxin-Hs1a from Cyriopagopus schmidti (Chinese bird spider).